A 117-amino-acid chain; its full sequence is Non-specific lipid-transfer protein 1 (117 aa).

Residues Met-1–Ala-26 form the signal peptide. 4 disulfides stabilise this stretch: Cys-29-Cys-76, Cys-39-Cys-53, Cys-54-Cys-99, and Cys-74-Cys-113. Asp-33 is lipidated: Cis-14-hydroxy-10,13-dioxo-7-heptadecenoic acid aspartate ester.

This sequence belongs to the plant LTP family. In terms of tissue distribution, aleurone layer of developing and germinating seeds.

Its function is as follows. Plant non-specific lipid-transfer proteins transfer phospholipids as well as galactolipids across membranes. May play a role in wax or cutin deposition in the cell walls of expanding epidermal cells and certain secretory tissues. This chain is Non-specific lipid-transfer protein 1 (LTP1), found in Hordeum vulgare (Barley).